Consider the following 712-residue polypeptide: DNA topoisomerase 3 (712 aa).

Positions K2 to T135 constitute a Toprim domain. Residues E8 and D104 each contribute to the Mg(2+) site. The 430-residue stretch at F152 to V581 folds into the Topo IA-type catalytic domain. Positions S186–Q191 are interaction with DNA. The O-(5'-phospho-DNA)-tyrosine intermediate role is filled by Y305.

Belongs to the type IA topoisomerase family. Requires Mg(2+) as cofactor.

The enzyme catalyses ATP-independent breakage of single-stranded DNA, followed by passage and rejoining.. Releases the supercoiling and torsional tension of DNA, which is introduced during the DNA replication and transcription, by transiently cleaving and rejoining one strand of the DNA duplex. Introduces a single-strand break via transesterification at a target site in duplex DNA. The scissile phosphodiester is attacked by the catalytic tyrosine of the enzyme, resulting in the formation of a DNA-(5'-phosphotyrosyl)-enzyme intermediate and the expulsion of a 3'-OH DNA strand. The free DNA strand then undergoes passage around the unbroken strand, thus removing DNA supercoils. Finally, in the religation step, the DNA 3'-OH attacks the covalent intermediate to expel the active-site tyrosine and restore the DNA phosphodiester backbone. The chain is DNA topoisomerase 3 from Staphylococcus saprophyticus subsp. saprophyticus (strain ATCC 15305 / DSM 20229 / NCIMB 8711 / NCTC 7292 / S-41).